A 2210-amino-acid polypeptide reads, in one-letter code: RNA-directed RNA polymerase L (2210 aa).

The tract at residues 26-285 (KAIFLSQTKL…KCAIMSEEDS (260 aa)) is endonuclease. Residues Glu51, Asp88, and Glu101 each coordinate Mn(2+). Lys114 is a catalytic residue. Residues 1163-1359 (LDMKSVVRQG…FLSDKLNKFV (197 aa)) form the RdRp catalytic domain. A Mg(2+)-binding site is contributed by Asp1319.

The protein belongs to the Bunyavirales RNA polymerase family. In terms of assembly, homomultimer; the oligomeric structure is essential for the polymerase activity. Interacts with nucleoprotein N. Interacts with protein Z; this interaction inhibits viral transcription and replication, Z partially blocks the product exit tunnel for the releasing nascent RNA product. It depends on Mn(2+) as a cofactor. Mg(2+) is required as a cofactor.

The protein resides in the virion. The protein localises to the host cytoplasm. It catalyses the reaction RNA(n) + a ribonucleoside 5'-triphosphate = RNA(n+1) + diphosphate. Functionally, RNA-dependent RNA polymerase, which is responsible for the replication and transcription of the viral RNA genome using antigenomic RNA as an intermediate. During transcription, synthesizes subgenomic RNAs and assures their capping by a cap-snatching mechanism, which involves the endonuclease activity cleaving the host capped pre-mRNAs. These short capped RNAs are then used as primers for viral transcription. The 3'-end of subgenomic mRNAs molecules are heterogeneous and not polyadenylated. The replicase function is to direct synthesis of antigenomic and genomic RNA which are encapsidated and non capped. As a consequence of the use of the same enzyme for both transcription and replication, these mechanisms need to be well coordinated. These processes may be regulated by proteins N and Z in a dose-dependent manner. Z protein inhibits the viral polymerase L und thus the viral transcription and RNA synthesis. The chain is RNA-directed RNA polymerase L from Sigmodon alstoni (PIRV).